A 270-amino-acid chain; its full sequence is MSETLKTQPYSKRAEVHPSPVARRLFNLMETKKTNLCASVDLTTTKEILDLLEKVGPYICLVKTHIDIVSDFSYEGTIVPLLALAKKYNFMIFEDRKFADIGNTVKSQYKGGVYQIAKWSDITNAHGVTGSGIVTGLKQAAEEVTDEPRGLLMLAELSSKGAIAHGKYTEETVEIAKTDKDFVIGFIAQNQMGGSDEGFDWIIMTPGVGLDDKGDALGQQYRTVSEVMSTGTDIIIVGRGLFGKGRDPSVEGERYMKAGWNAYLARTNQL.

Substrate-binding positions include Asp-41, 63 to 65 (KTH), 95 to 104 (DRKFADIGNT), Tyr-221, and Arg-239. Lys-97 functions as the Proton donor in the catalytic mechanism.

It belongs to the OMP decarboxylase family.

The enzyme catalyses orotidine 5'-phosphate + H(+) = UMP + CO2. It participates in pyrimidine metabolism; UMP biosynthesis via de novo pathway; UMP from orotate: step 2/2. The chain is Orotidine 5'-phosphate decarboxylase (URA3) from Candida boidinii (Yeast).